The following is a 145-amino-acid chain: Deoxyuridine 5'-triphosphate nucleotidohydrolase (145 aa).

Substrate is bound by residues 64–66 (RSG), Asn-77, 81–83 (TID), and Met-91.

It belongs to the dUTPase family. Mg(2+) is required as a cofactor.

It catalyses the reaction dUTP + H2O = dUMP + diphosphate + H(+). It participates in pyrimidine metabolism; dUMP biosynthesis; dUMP from dCTP (dUTP route): step 2/2. In terms of biological role, this enzyme is involved in nucleotide metabolism: it produces dUMP, the immediate precursor of thymidine nucleotides and it decreases the intracellular concentration of dUTP so that uracil cannot be incorporated into DNA. This Leptospira interrogans serogroup Icterohaemorrhagiae serovar copenhageni (strain Fiocruz L1-130) protein is Deoxyuridine 5'-triphosphate nucleotidohydrolase.